A 302-amino-acid polypeptide reads, in one-letter code: Glycine--tRNA ligase alpha subunit (302 aa).

Belongs to the class-II aminoacyl-tRNA synthetase family. As to quaternary structure, tetramer of two alpha and two beta subunits.

It localises to the cytoplasm. It carries out the reaction tRNA(Gly) + glycine + ATP = glycyl-tRNA(Gly) + AMP + diphosphate. The polypeptide is Glycine--tRNA ligase alpha subunit (Baumannia cicadellinicola subsp. Homalodisca coagulata).